We begin with the raw amino-acid sequence, 349 residues long: Protein-glutamate methylesterase/protein-glutamine glutaminase 3 (349 aa).

The 118-residue stretch at D2 to S119 folds into the Response regulatory domain. D52 carries the post-translational modification 4-aspartylphosphate. A CheB-type methylesterase domain is found at E157–L340. Catalysis depends on residues S169, H196, and D289.

This sequence belongs to the CheB family. Post-translationally, phosphorylated by CheA. Phosphorylation of the N-terminal regulatory domain activates the methylesterase activity.

Its subcellular location is the cytoplasm. It carries out the reaction [protein]-L-glutamate 5-O-methyl ester + H2O = L-glutamyl-[protein] + methanol + H(+). It catalyses the reaction L-glutaminyl-[protein] + H2O = L-glutamyl-[protein] + NH4(+). In terms of biological role, involved in chemotaxis. Part of a chemotaxis signal transduction system that modulates chemotaxis in response to various stimuli. Catalyzes the demethylation of specific methylglutamate residues introduced into the chemoreceptors (methyl-accepting chemotaxis proteins or MCP) by CheR. Also mediates the irreversible deamidation of specific glutamine residues to glutamic acid. The sequence is that of Protein-glutamate methylesterase/protein-glutamine glutaminase 3 from Hahella chejuensis (strain KCTC 2396).